Here is a 502-residue protein sequence, read N- to C-terminus: Acetyl-coenzyme A carboxylase carboxyl transferase subunit beta, chloroplastic (502 aa).

Over residues 191-202 the composition is skewed to low complexity; that stretch reads GSDSESSSIRTS. Positions 191–212 are disordered; sequence GSDSESSSIRTSGNDSNFNVRE. The 272-residue stretch at 226–497 folds into the CoA carboxyltransferase N-terminal domain; it reads LWVQCENCYE…NQNSSGARGS (272 aa). Residues C230, C233, C249, and C252 each contribute to the Zn(2+) site. The segment at 230-252 adopts a C4-type zinc-finger fold; it reads CENCYELNYRSFFRSKMNICEQC.

The protein belongs to the AccD/PCCB family. As to quaternary structure, acetyl-CoA carboxylase is a heterohexamer composed of biotin carboxyl carrier protein, biotin carboxylase and 2 subunits each of ACCase subunit alpha and ACCase plastid-coded subunit beta (accD). Zn(2+) serves as cofactor.

The protein resides in the plastid. It is found in the chloroplast stroma. It catalyses the reaction N(6)-carboxybiotinyl-L-lysyl-[protein] + acetyl-CoA = N(6)-biotinyl-L-lysyl-[protein] + malonyl-CoA. The protein operates within lipid metabolism; malonyl-CoA biosynthesis; malonyl-CoA from acetyl-CoA: step 1/1. Component of the acetyl coenzyme A carboxylase (ACC) complex. Biotin carboxylase (BC) catalyzes the carboxylation of biotin on its carrier protein (BCCP) and then the CO(2) group is transferred by the transcarboxylase to acetyl-CoA to form malonyl-CoA. The chain is Acetyl-coenzyme A carboxylase carboxyl transferase subunit beta, chloroplastic from Chloranthus spicatus (Chulantree).